A 131-amino-acid polypeptide reads, in one-letter code: Fumarate reductase subunit C (131 aa).

Helical transmembrane passes span 30–50 (EGTA…LFAL), 57–77 (WMGF…LITL), and 109–129 (IIKG…YVAL).

The protein belongs to the FrdC family. In terms of assembly, part of an enzyme complex containing four subunits: a flavoprotein (FrdA), an iron-sulfur protein (FrdB), and two hydrophobic anchor proteins (FrdC and FrdD).

It is found in the cell inner membrane. Two distinct, membrane-bound, FAD-containing enzymes are responsible for the catalysis of fumarate and succinate interconversion; fumarate reductase is used in anaerobic growth, and succinate dehydrogenase is used in aerobic growth. Anchors the catalytic components of the fumarate reductase complex to the cell inner membrane, binds quinones. The sequence is that of Fumarate reductase subunit C from Salmonella choleraesuis (strain SC-B67).